A 323-amino-acid chain; its full sequence is tRNA dimethylallyltransferase (323 aa).

12-19 contacts ATP; it reads GPTAAGKT. 14 to 19 lines the substrate pocket; sequence TAAGKT. Interaction with substrate tRNA stretches follow at residues 37–40 and 161–165; these read DSAL and QRLIR.

The protein belongs to the IPP transferase family. In terms of assembly, monomer. The cofactor is Mg(2+).

It carries out the reaction adenosine(37) in tRNA + dimethylallyl diphosphate = N(6)-dimethylallyladenosine(37) in tRNA + diphosphate. In terms of biological role, catalyzes the transfer of a dimethylallyl group onto the adenine at position 37 in tRNAs that read codons beginning with uridine, leading to the formation of N6-(dimethylallyl)adenosine (i(6)A). The sequence is that of tRNA dimethylallyltransferase from Pseudomonas entomophila (strain L48).